We begin with the raw amino-acid sequence, 922 residues long: Coronin-7 (922 aa).

WD repeat units follow at residues 75-115, 124-163, 166-205, and 209-253; these read CHSD…EALP, PEEL…HLTE, AHKD…QASQ, and AHEN…SALA. A disordered region spans residues 386–462; that stretch reads NPAHRPHPRF…TSPSQRSLQS (77 aa). Residues 423–456 are compositionally biased toward low complexity; the sequence is SEGFSSPSSLVSPSTPSSLGLSLSSTSGIGTSPS. 2 positions are modified to phosphoserine: serine 459 and serine 462. A Glycyl lysine isopeptide (Lys-Gly) (interchain with G-Cter in ubiquitin) cross-link involves residue lysine 469. WD repeat units follow at residues 539–579, 589–629, 632–671, and 725–765; these read QNGA…LKNV, GHTE…EQLR, GHQD…LPLQ, and DVAP…PFFL. The disordered stretch occupies residues 854–922; the sequence is LQPPGMTPVS…FEGVDEDEWD (69 aa). A Phosphothreonine modification is found at threonine 874. Residues 881 to 893 show a composition bias toward basic and acidic residues; the sequence is LEEKSDQQKKEEL. Residue serine 912 is modified to Phosphoserine.

This sequence belongs to the WD repeat coronin family. Interacts with clathrin adapter AP1 complex. This interaction takes place at Golgi membranes and not AP1-positive endosomal membranes. Interacts (when ubiquitinated at Lys-469) with EPS15. Post-translationally, the membrane-associated form is phosphorylated on tyrosine residues. Ubiquitinated via 'Lys-33'-linked ubiquitin chains by the BCR(KLHL20) E3 ubiquitin ligase complex: 'Lys-33'-linked ubiquitination promotes interaction with EPS15 and facilitates actin polymerization at the trans-Golgi network, thereby facilitating post-Golgi trafficking. Deubiquitinated by ZRANB1/TRABID.

The protein localises to the golgi apparatus membrane. It is found in the golgi apparatus. It localises to the trans-Golgi network. Its subcellular location is the cytoplasmic vesicle. The protein resides in the cytoplasm. The protein localises to the cytosol. In terms of biological role, F-actin regulator involved in anterograde Golgi to endosome transport: upon ubiquitination via 'Lys-33'-linked ubiquitin chains by the BCR(KLHL20) E3 ubiquitin ligase complex, interacts with EPS15 and localizes to the trans-Golgi network, where it promotes actin polymerization, thereby facilitating post-Golgi trafficking. May play a role in the maintenance of the Golgi apparatus morphology. This Rattus norvegicus (Rat) protein is Coronin-7 (Coro7).